We begin with the raw amino-acid sequence, 285 residues long: Diphthine methyl ester synthase (285 aa).

S-adenosyl-L-methionine is bound by residues Leu-9, Asp-84, Gly-87, 112 to 113, Leu-163, Val-221, and His-246; that span reads SI.

Belongs to the diphthine synthase family.

The protein localises to the cytoplasm. The enzyme catalyses 2-[(3S)-amino-3-carboxypropyl]-L-histidyl-[translation elongation factor 2] + 4 S-adenosyl-L-methionine = diphthine methyl ester-[translation elongation factor 2] + 4 S-adenosyl-L-homocysteine + 3 H(+). Its pathway is protein modification; peptidyl-diphthamide biosynthesis. Functionally, S-adenosyl-L-methionine-dependent methyltransferase that catalyzes four methylations of the modified target histidine residue in translation elongation factor 2 (EF-2), to form an intermediate called diphthine methyl ester. The four successive methylation reactions represent the second step of diphthamide biosynthesis. This Aspergillus fumigatus (strain ATCC MYA-4609 / CBS 101355 / FGSC A1100 / Af293) (Neosartorya fumigata) protein is Diphthine methyl ester synthase (dph5).